Here is a 384-residue protein sequence, read N- to C-terminus: Lipid-A-disaccharide synthase 1 (384 aa).

It belongs to the LpxB family.

It carries out the reaction a lipid X + a UDP-2-N,3-O-bis[(3R)-3-hydroxyacyl]-alpha-D-glucosamine = a lipid A disaccharide + UDP + H(+). It functions in the pathway bacterial outer membrane biogenesis; LPS lipid A biosynthesis. Condensation of UDP-2,3-diacylglucosamine and 2,3-diacylglucosamine-1-phosphate to form lipid A disaccharide, a precursor of lipid A, a phosphorylated glycolipid that anchors the lipopolysaccharide to the outer membrane of the cell. The protein is Lipid-A-disaccharide synthase 1 of Legionella pneumophila (strain Lens).